Reading from the N-terminus, the 129-residue chain is Acetophenone carboxylase beta subunit (129 aa).

Acetophenone carboxylase consists of five subunits; a heterooctameric subcomplex of two alpha (Apc1), two beta (Apc2), two gamma (Apc3) and two delta (Apc4) subunits assembles with the epsilon (Apc5) subunit in an unknown stoichiometry. Mg(2+) serves as cofactor. The cofactor is Mn(2+).

It localises to the cytoplasm. The enzyme catalyses acetophenone + hydrogencarbonate + 2 ATP + H2O = 3-oxo-3-phenylpropanoate + 2 ADP + 2 phosphate + 2 H(+). With respect to regulation, inhibited by zinc ions, carbamoylphosphate and beta,gamma-imido-ATP. In terms of biological role, catalyzes the carboxylation of acetophenone to form 3-oxo-3-phenylpropanoate (benzoylacetate) in the anaerobic catabolism of ethylbenzene. Also carboxylates propiophenone at the same rate and 4-acetyl-pyridine at lower rates. The sequence is that of Acetophenone carboxylase beta subunit (apc2) from Aromatoleum aromaticum (strain DSM 19018 / LMG 30748 / EbN1) (Azoarcus sp. (strain EbN1)).